Consider the following 171-residue polypeptide: Co-chaperone protein HscB (171 aa).

A J domain is found at 2–74 (DYFTLFGLPA…LTRAEYLLSL (73 aa)).

The protein belongs to the HscB family. In terms of assembly, interacts with HscA and stimulates its ATPase activity. Interacts with IscU.

In terms of biological role, co-chaperone involved in the maturation of iron-sulfur cluster-containing proteins. Seems to help targeting proteins to be folded toward HscA. This is Co-chaperone protein HscB from Salmonella heidelberg (strain SL476).